The following is a 171-amino-acid chain: Putative charged multivesicular body protein 4B-like protein CHMP4BP1 (171 aa).

A compositionally biased stretch (basic and acidic residues) spans 1 to 17 (MLSKKQEFLEKKIEQRH). Disordered regions lie at residues 1 to 24 (MLSK…NKPA) and 132 to 171 (EQEE…KTTT).

It belongs to the SNF7 family.

This chain is Putative charged multivesicular body protein 4B-like protein CHMP4BP1 (CHMP4BP1), found in Homo sapiens (Human).